Here is a 124-residue protein sequence, read N- to C-terminus: Small ribosomal subunit protein uS12 (124 aa).

Position 89 is a 3-methylthioaspartic acid (Asp-89). The disordered stretch occupies residues 104-124 (LQGVKDRKQSRSKYGAKRPKK). Residues 113-124 (SRSKYGAKRPKK) show a composition bias toward basic residues.

This sequence belongs to the universal ribosomal protein uS12 family. In terms of assembly, part of the 30S ribosomal subunit. Contacts proteins S8 and S17. May interact with IF1 in the 30S initiation complex.

Functionally, with S4 and S5 plays an important role in translational accuracy. Interacts with and stabilizes bases of the 16S rRNA that are involved in tRNA selection in the A site and with the mRNA backbone. Located at the interface of the 30S and 50S subunits, it traverses the body of the 30S subunit contacting proteins on the other side and probably holding the rRNA structure together. The combined cluster of proteins S8, S12 and S17 appears to hold together the shoulder and platform of the 30S subunit. The polypeptide is Small ribosomal subunit protein uS12 (Thiomonas delicata (Thiomonas cuprina)).